The sequence spans 420 residues: Glutamyl-tRNA reductase (420 aa).

Substrate contacts are provided by residues 49-52 (TCNR), serine 107, 112-114 (EPQ), and glutamine 118. Cysteine 50 (nucleophile) is an active-site residue. 187–192 (GAGETI) is a binding site for NADP(+).

It belongs to the glutamyl-tRNA reductase family. As to quaternary structure, homodimer.

It carries out the reaction (S)-4-amino-5-oxopentanoate + tRNA(Glu) + NADP(+) = L-glutamyl-tRNA(Glu) + NADPH + H(+). It participates in porphyrin-containing compound metabolism; protoporphyrin-IX biosynthesis; 5-aminolevulinate from L-glutamyl-tRNA(Glu): step 1/2. Functionally, catalyzes the NADPH-dependent reduction of glutamyl-tRNA(Glu) to glutamate 1-semialdehyde (GSA). This Methylococcus capsulatus (strain ATCC 33009 / NCIMB 11132 / Bath) protein is Glutamyl-tRNA reductase.